The following is a 271-amino-acid chain: Tryptophan synthase alpha chain (271 aa).

Active-site proton acceptor residues include glutamate 49 and aspartate 60.

This sequence belongs to the TrpA family. Tetramer of two alpha and two beta chains.

The enzyme catalyses (1S,2R)-1-C-(indol-3-yl)glycerol 3-phosphate + L-serine = D-glyceraldehyde 3-phosphate + L-tryptophan + H2O. It participates in amino-acid biosynthesis; L-tryptophan biosynthesis; L-tryptophan from chorismate: step 5/5. Its function is as follows. The alpha subunit is responsible for the aldol cleavage of indoleglycerol phosphate to indole and glyceraldehyde 3-phosphate. The chain is Tryptophan synthase alpha chain from Burkholderia pseudomallei (strain 1106a).